The following is a 187-amino-acid chain: Elongation factor P (187 aa).

This sequence belongs to the elongation factor P family.

It localises to the cytoplasm. The protein operates within protein biosynthesis; polypeptide chain elongation. In terms of biological role, involved in peptide bond synthesis. Stimulates efficient translation and peptide-bond synthesis on native or reconstituted 70S ribosomes in vitro. Probably functions indirectly by altering the affinity of the ribosome for aminoacyl-tRNA, thus increasing their reactivity as acceptors for peptidyl transferase. This is Elongation factor P from Helicobacter pylori (strain P12).